The following is a 269-amino-acid chain: MDINVVITRCEDYTETLARNTRKVLPTIGRLLLISTFVEDGLRLLFNTHDHVNHFSYNWGLNYHFSLFLTIVMIINLLFGSLFVMMRYKVTESSAVLGFTIFAQVILYQLYTTYHLLTRNISIVAAIMLLVAENMLRKPKPANYTQLPRDEHEIEVTSVLLAACRVCLNLMLISMVHFDMSYTRILLCIISYGMMIFVWLGFKTRMMSFMLATWLFAYNIVLNDFWNKDAELHIIRYDFFQTLSAIGGLLLLIHTGPGEFSFDELKKKW.

The next 5 membrane-spanning stretches (helical) occupy residues 65-85 (FSLF…LFVM), 156-176 (VTSV…ISMV), 182-202 (YTRI…WLGF), 206-226 (MMSF…NDFW), and 242-262 (TLSA…EFSF). Positions 266 to 269 (KKKW) match the Di-lysine motif motif.

The protein belongs to the SURF4 family.

The protein localises to the membrane. This is an uncharacterized protein from Caenorhabditis elegans.